Here is a 476-residue protein sequence, read N- to C-terminus: Glycogen synthase (476 aa).

Lys15 contacts ADP-alpha-D-glucose.

It belongs to the glycosyltransferase 1 family. Bacterial/plant glycogen synthase subfamily.

It carries out the reaction [(1-&gt;4)-alpha-D-glucosyl](n) + ADP-alpha-D-glucose = [(1-&gt;4)-alpha-D-glucosyl](n+1) + ADP + H(+). The protein operates within glycan biosynthesis; glycogen biosynthesis. In terms of biological role, synthesizes alpha-1,4-glucan chains using ADP-glucose. The protein is Glycogen synthase of Bacillus cereus (strain B4264).